The sequence spans 205 residues: MMRTLITIHPLPLLLLLQQLLQPVQFQEVDTDFDFPEEDKKEEFEEYSEQFFSIGPTRPPTKEKVKRRVLIEPGMPLNHIEYCNHEIMGKNVYYKHRCVAEHYFLLMQYDELQKICYNRFVPCKNGIRKCNRSKGLVEGVYCNLTEAFEIPACKYESLYRKGYVLITCSWQNEMQKLIPHTINDLVEPPEHRSFLSEDGVFVIPP.

Positions 1–26 (MMRTLITIHPLPLLLLLQQLLQPVQF) are cleaved as a signal peptide. Cystine bridges form between cysteine 98-cysteine 153, cysteine 116-cysteine 168, and cysteine 123-cysteine 130. N-linked (GlcNAc...) asparagine glycans are attached at residues asparagine 131 and asparagine 143.

Belongs to the pancreatic ribonuclease family.

It is found in the secreted. Functionally, does not exhibit any ribonuclease activity. The polypeptide is Inactive ribonuclease-like protein 9 (RNASE9) (Gorilla gorilla gorilla (Western lowland gorilla)).